A 140-amino-acid chain; its full sequence is MLKTISPLISPTLLKVLAEMGHGDEIIFSDAHFPAHSLGPQVIRADGLSVSDLLRAIIPLFELDSYAPPLVMMAAVEGDTLDPSVEARYRDALSLEAPCPDIVRIDRYAFYERAQKAFAIVITGECAKYGNILLKKGVTP.

The active-site Proton donor is the His22. Substrate is bound by residues Asp30, Arg107, and 129–131; that span reads YGN.

It belongs to the RbsD / FucU family. FucU mutarotase subfamily. Homodecamer.

The protein localises to the cytoplasm. It carries out the reaction alpha-L-fucose = beta-L-fucose. It functions in the pathway carbohydrate metabolism; L-fucose metabolism. Involved in the anomeric conversion of L-fucose. The polypeptide is L-fucose mutarotase (Salmonella paratyphi B (strain ATCC BAA-1250 / SPB7)).